Reading from the N-terminus, the 189-residue chain is uncharacterized protein (189 aa).

The segment covering 105–115 has biased composition (basic and acidic residues); it reads EKLEKEEESKT. Residues 105–189 are disordered; the sequence is EKLEKEEESK…TDDEKTEVST (85 aa). Residues 116 to 136 show a composition bias toward basic residues; that stretch reads AKKRAKRLRQKAAAKKRKLTK. Over residues 141–151 the composition is skewed to acidic residues; that stretch reads SDESSSDDSDS. Over residues 161 to 177 the composition is skewed to basic and acidic residues; it reads SEGKQNTEVEDKDKVEK. The span at 178 to 189 shows a compositional bias: acidic residues; that stretch reads EETDDEKTEVST.

This is an uncharacterized protein from Caenorhabditis elegans.